We begin with the raw amino-acid sequence, 91 residues long: MGLTETTLVLVSLAFFASAVAHNCQNGTRPASEEKREGCDYYCWNAETNSWDKFFFGNGERCFYNDGGEGLCQNGECHLTTDSSVPNDSDV.

A signal peptide spans 1-21; it reads MGLTETTLVLVSLAFFASAVA. N-linked (GlcNAc...) asparagine glycosylation is found at Asn26 and Asn87.

The protein belongs to the salp14 family. Glycosylated; deglycosylation largely abrogates the complement inhibitory effect. In terms of tissue distribution, nymph salivary gland (at protein level). Saliva (at protein level). Not detected in midgut.

It localises to the secreted. Its function is as follows. Inhibits the lectin pathway of complement system activation in the host by reducing binding of mannose-binding lectin and L-ficolin to their ligands. Does not affect the classical and alternative pathways of complement system activation in the host. (Microbial infection) Protects Borrelia garinii (strain A87S) from host complement-mediated killing by preventing deposition of host C5b-9 membrane attack complexes on the surface of spirochetes. Inhibits phagocytosis of B.garinii (strain A87S) by human neutrophils. Impairs Borrelia-induced complement-mediated chemotaxis of human polymorphonuclear leukocytes. Functionally, (Microbial infection) Protects Borrelia burgdorferi (strain N40), which is resistant to normal human serum, from Borrelia-opsonizing antibody-mediated complement-dependent killing. In Ixodes scapularis (Black-legged tick), this protein is Salivary lectin pathway inhibitor.